Reading from the N-terminus, the 452-residue chain is Probable M18 family aminopeptidase 1 (452 aa).

Histidine 93, histidine 168, and histidine 427 together coordinate Zn(2+).

This sequence belongs to the peptidase M18 family. It depends on Zn(2+) as a cofactor.

This Thermotoga neapolitana protein is Probable M18 family aminopeptidase 1 (apeA).